The primary structure comprises 545 residues: Calcium-dependent protein kinase 10 (545 aa).

The tract at residues 1-36 is disordered; that stretch reads MGNCNACVRPDSKESKPSSKPKKPNRDRKLNPFAGD. G2 carries the N-myristoyl glycine lipid modification. One can recognise a Protein kinase domain in the interval 63–321; that stretch reads YILGRELGRG…AQQVLAHPWI (259 aa). ATP contacts are provided by residues 69–77 and K92; that span reads LGRGEFGIT. The active-site Proton acceptor is D187. Position 227 is a phosphoserine (S227). Residues 327–357 are autoinhibitory domain; the sequence is APNVPLGDIVRSRLKQFSMMNRFKKKVLRVI. EF-hand domains are found at residues 364–399, 400–435, 436–471, and 472–507; these read QEVEVIKNMFSLMDDDKDGKITYPELKAGLQKVGSQ, LGEPEIKMLMEVADVDGNGFLDYGEFVAVIIHLQKI, ENDELFKLAFMFFDKDGSTYIELDELREALADELGE, and PDASVLSDIMREVDTDKDGRINYDEFVTMMKAGTDW. Ca(2+) is bound by residues D377, D379, D381, K383, E388, D413, D415, N417, E424, D449, D451, S453, Y455, E460, D485, D487, D489, R491, and E496.

It belongs to the protein kinase superfamily. Ser/Thr protein kinase family. CDPK subfamily.

The protein resides in the membrane. It carries out the reaction L-seryl-[protein] + ATP = O-phospho-L-seryl-[protein] + ADP + H(+). The catalysed reaction is L-threonyl-[protein] + ATP = O-phospho-L-threonyl-[protein] + ADP + H(+). With respect to regulation, activated by calcium. Autophosphorylation may play an important role in the regulation of the kinase activity. In terms of biological role, may play a role in signal transduction pathways that involve calcium as a second messenger. May be a positive regulator controlling stress signal transduction. This chain is Calcium-dependent protein kinase 10 (CPK10), found in Arabidopsis thaliana (Mouse-ear cress).